Consider the following 299-residue polypeptide: Very long chain fatty acid elongase 5 (299 aa).

An N-acetylmethionine modification is found at Met-1. 7 helical membrane-spanning segments follow: residues 26–46 (WFLLDNYIPTFVCSAIYLLIV), 64–84 (ILVVYNLGLTLLSLYMFYELV), 112–132 (VLWWYYFSKLIEFMDTFFFIL), 139–158 (ITVLHVYHHATMLNIWWFVM), 168–187 (FGATLNSFIHVLMYSYYGLS), 205–225 (GQLVQFVLTIIQTSCGVIWPC), and 227–247 (FPLGWLYFQIGYMISLIALFT).

Belongs to the ELO family. ELOVL5 subfamily. As to quaternary structure, interacts with TECR. In terms of tissue distribution, highly expressed in lung and brain.

Its subcellular location is the endoplasmic reticulum membrane. It is found in the cell projection. It localises to the dendrite. The catalysed reaction is a very-long-chain acyl-CoA + malonyl-CoA + H(+) = a very-long-chain 3-oxoacyl-CoA + CO2 + CoA. It catalyses the reaction (6Z,9Z,12Z,15Z)-octadecatetraenoyl-CoA + malonyl-CoA + H(+) = (8Z,11Z,14Z,17Z)-3-oxoicosatetraenoyl-CoA + CO2 + CoA. The enzyme catalyses (6Z,9Z,12Z)-octadecatrienoyl-CoA + malonyl-CoA + H(+) = (8Z,11Z,14Z)-3-oxoeicosatrienoyl-CoA + CO2 + CoA. It carries out the reaction (5Z,8Z,11Z,14Z,17Z)-eicosapentaenoyl-CoA + malonyl-CoA + H(+) = 3-oxo-(7Z,10Z,13Z,16Z,19Z)-docosapentaenoyl-CoA + CO2 + CoA. The catalysed reaction is (5Z,8Z,11Z,14Z)-eicosatetraenoyl-CoA + malonyl-CoA + H(+) = (7Z,10Z,13Z,16Z)-3-oxodocosatetraenoyl-CoA + CO2 + CoA. It catalyses the reaction (9Z,12Z,15Z)-octadecatrienoyl-CoA + malonyl-CoA + H(+) = (11Z,14Z,17Z)-3-oxoeicosatrienoyl-CoA + CO2 + CoA. The enzyme catalyses (9Z)-hexadecenoyl-CoA + malonyl-CoA + H(+) = 3-oxo-(11Z)-octadecenoyl-CoA + CO2 + CoA. It carries out the reaction (9Z)-octadecenoyl-CoA + malonyl-CoA + H(+) = 3-oxo-(11Z)-eicosenoyl-CoA + CO2 + CoA. The catalysed reaction is (11Z)-octadecenoyl-CoA + malonyl-CoA + H(+) = 3-oxo-(13Z)-eicosenoyl-CoA + CO2 + CoA. It catalyses the reaction (9Z,12Z)-octadecadienoyl-CoA + malonyl-CoA + H(+) = (11Z,14Z)-3-oxoicosa-11,14-dienoyl-CoA + CO2 + CoA. The protein operates within lipid metabolism; polyunsaturated fatty acid biosynthesis. Catalyzes the first and rate-limiting reaction of the four reactions that constitute the long-chain fatty acids elongation cycle. This endoplasmic reticulum-bound enzymatic process allows the addition of 2 carbons to the chain of long- and very long-chain fatty acids (VLCFAs) per cycle. Condensing enzyme that acts specifically toward polyunsaturated acyl-CoA with the higher activity toward C18:3(n-6) acyl-CoA. May participate in the production of monounsaturated and of polyunsaturated VLCFAs of different chain lengths that are involved in multiple biological processes as precursors of membrane lipids and lipid mediators. In conditions where the essential linoleic and alpha linoleic fatty acids are lacking it is also involved in the synthesis of Mead acid from oleic acid. This is Very long chain fatty acid elongase 5 from Rattus norvegicus (Rat).